The sequence spans 258 residues: Small ribosomal subunit protein uS2 (258 aa).

Residues 226-258 form a disordered region; that stretch reads KQGQDDEETLEVDFKENADGSEEIVSAEENPED. A compositionally biased stretch (acidic residues) spans 244-258; sequence DGSEEIVSAEENPED.

The protein belongs to the universal ribosomal protein uS2 family.

This Lactobacillus acidophilus (strain ATCC 700396 / NCK56 / N2 / NCFM) protein is Small ribosomal subunit protein uS2.